Here is a 586-residue protein sequence, read N- to C-terminus: Phosphatase and actin regulator 1 (586 aa).

A Nuclear localization signal motif is present at residues 62-83 (RRRSKFATLGRLFKPWKWRKKK). Residues 92-117 (AALERKISMRQSREELIKRGVLKEMY) form an RPEL 1 repeat. The disordered stretch occupies residues 373–414 (ECEDDKENVPHETSYDDSSCLYSRDEEEDDDDDDDDEDDDSS). The span at 397 to 413 (DEEEDDDDDDDDEDDDS) shows a compositional bias: acidic residues. 3 RPEL repeats span residues 428–453 (DSLAIKLSNRPSKRELEEKNILPMQT), 466–491 (TKLTRRLSQRPTAEELEQRNILKPRN), and 504–529 (RRLTRKLSQRPTVEELREKKILISFS).

Belongs to the phosphatase and actin regulator family. Interacts (via RPEL repeats) with ACTA1.

It localises to the cytoplasm. The protein resides in the synapse. Its subcellular location is the nucleus. Binds actin monomers (G actin) and plays a role in the reorganization of the actin cytoskeleton and in formation of actin stress fibers. This Xenopus laevis (African clawed frog) protein is Phosphatase and actin regulator 1 (phactr1).